Here is a 515-residue protein sequence, read N- to C-terminus: Fatty acyl-CoA reductase 2 (515 aa).

At 1 to 464 the chain is on the cytoplasmic side; sequence MSTIAAFYGG…KAKQRLKRLR (464 aa). The helical transmembrane segment at 465–484 threads the bilayer; sequence NIHYLFNTALFLIAWRLLIA. The Peroxisomal portion of the chain corresponds to 485 to 515; sequence RSQMARNVWFFIVSFCYKFLSYFRASSTLKV.

This sequence belongs to the fatty acyl-CoA reductase family.

It localises to the peroxisome membrane. It carries out the reaction a long-chain fatty acyl-CoA + 2 NADPH + 2 H(+) = a long-chain primary fatty alcohol + 2 NADP(+) + CoA. It catalyses the reaction a very long-chain fatty acyl-CoA + 2 NADPH + 2 H(+) = a very long-chain primary fatty alcohol + 2 NADP(+) + CoA. The catalysed reaction is an ultra-long-chain fatty acyl-CoA + 2 NADPH + 2 H(+) = an ultra long-chain primary fatty alcohol + 2 NADP(+) + CoA. The enzyme catalyses hexadecanoyl-CoA + 2 NADPH + 2 H(+) = hexadecan-1-ol + 2 NADP(+) + CoA. It carries out the reaction octadecanoyl-CoA + 2 NADPH + 2 H(+) = octadecan-1-ol + 2 NADP(+) + CoA. It catalyses the reaction eicosanoyl-CoA + 2 NADPH + 2 H(+) = eicosan-1-ol + 2 NADP(+) + CoA. The catalysed reaction is docosanoyl-CoA + 2 NADPH + 2 H(+) = docosan-1-ol + 2 NADP(+) + CoA. The enzyme catalyses tetracosanoyl-CoA + 2 NADPH + 2 H(+) = tetracosan-1-ol + 2 NADP(+) + CoA. It carries out the reaction hexacosanoyl-CoA + 2 NADPH + 2 H(+) = hexacosan-1-ol + 2 NADP(+) + CoA. It catalyses the reaction octacosanoyl-CoA + 2 NADPH + 2 H(+) = octacosan-1-ol + 2 NADP(+) + CoA. The catalysed reaction is triacontanoyl-CoA + 2 NADPH + 2 H(+) = triacontan-1-ol + 2 NADP(+) + CoA. The enzyme catalyses 18-methylnonadecanoyl-CoA + 2 NADPH + 2 H(+) = 18-methylnonadecan-1-ol + 2 NADP(+) + CoA. It carries out the reaction 20-methylheneicosanoyl-CoA + 2 NADPH + 2 H(+) = 20-methylheneicosan-1-ol + 2 NADP(+) + CoA. It catalyses the reaction 22-methyltricosanoyl-CoA + 2 NADPH + 2 H(+) = 22-methyltricosan-1-ol + 2 NADP(+) + CoA. The catalysed reaction is 24-methylpentacosanoyl-CoA + 2 NADPH + 2 H(+) = 24-methylpentacosan-1-ol + 2 NADP(+) + CoA. Functionally, catalyzes the reduction of saturated but not unsaturated C16 or C18 fatty acyl-CoA to fatty alcohols (FAls). A lower activity can be observed with shorter fatty acyl-CoA substrates. Can produce very long-chain and ultra long-chain FAls, regardless of whether they have a straight or branched chain. Involved in the production of ether lipids/plasmalogens and wax monoesters whose synthesis requires FAls as substrates. This Homo sapiens (Human) protein is Fatty acyl-CoA reductase 2.